A 305-amino-acid chain; its full sequence is Energy-coupling factor transporter ATP-binding protein EcfA2 (305 aa).

Residues Leu13–Glu262 enclose the ABC transporter domain. ATP is bound at residue Gly55–Ser62.

It belongs to the ABC transporter superfamily. Energy-coupling factor EcfA family. In terms of assembly, forms a stable energy-coupling factor (ECF) transporter complex composed of 2 membrane-embedded substrate-binding proteins (S component), 2 ATP-binding proteins (A component) and 2 transmembrane proteins (T component).

It is found in the cell membrane. Functionally, ATP-binding (A) component of a common energy-coupling factor (ECF) ABC-transporter complex. Unlike classic ABC transporters this ECF transporter provides the energy necessary to transport a number of different substrates. In Spiroplasma kunkelii, this protein is Energy-coupling factor transporter ATP-binding protein EcfA2.